Reading from the N-terminus, the 1745-residue chain is ADAMTS-like protein 1 (1745 aa).

The N-terminal stretch at 1-28 (MECCRRAAPGTPLLVLAFLLLSSRTARS) is a signal peptide. In terms of domain architecture, TSP type-1 1 spans 33 to 82 (EGLWDAWGPWSECSRTCGGGASYSLRRCLSSKSCEGRNIRYRTCSNVDCP). 3 cysteine pairs are disulfide-bonded: Cys-45–Cys-76, Cys-49–Cys-81, and Cys-60–Cys-66. Asn-251 is a glycosylation site (N-linked (GlcNAc...) asparagine). O-linked (Fuc...) serine glycosylation is found at Ser-310 and Ser-391. TSP type-1 domains lie at 376–424 (PLPR…MYTP), 436–493 (DCPK…TPCY), 522–584 (EEPS…GPCN), 607–667 (ELYD…DPCP), 703–762 (CPPA…KKDD), and 763–825 (CPSE…ATCA). O-linked (Fuc...) threonine glycosylation is present at Thr-451. Intrachain disulfides connect Cys-534–Cys-578, Cys-538–Cys-583, and Cys-549–Cys-567. Cystine bridges form between Cys-775–Cys-819, Cys-779–Cys-824, Cys-790–Cys-807, and Cys-874–Cys-922. One can recognise an Ig-like C2-type 1 domain in the interval 836 to 938 (PHIAAARNIY…EQFVIKLIGG (103 aa)). Disordered stretches follow at residues 966–991 (EALQ…GLTA) and 1114–1137 (VSGF…RPHR). The span at 1115 to 1126 (SGFSSSLRSSSG) shows a compositional bias: low complexity. Ig-like C2-type domains follow at residues 1139-1241 (PAIL…IAVT), 1261-1352 (PTVT…TQLL), and 1378-1468 (PSVL…ASLV). Cystine bridges form between Cys-1177/Cys-1225, Cys-1283/Cys-1336, and Cys-1401/Cys-1452. 2 TSP type-1 domains span residues 1528 to 1591 (CPSR…QLCV) and 1649 to 1709 (CSVH…TPCE). The 37-residue stretch at 1709–1745 (ENTECRDTTRYCEKVRQLKLCQLGQFRSRCCGTCGKA) folds into the PLAC domain.

Monomer. Post-translationally, glycosylated. O-fucosylated by POFUT2 on a serine or a threonine residue found within the consensus sequence C1-X(2)-(S/T)-C2-G of the TSP type-1 repeat domains where C1 and C2 are the first and second cysteine residue of the repeat, respectively. Fucosylated repeats can then be further glycosylated by the addition of a beta-1,3-glucose residue by the glucosyltransferase, B3GALTL. Fucosylation mediates the efficient secretion of ADAMTS family members. Can also be C-glycosylated with one or two mannose molecules on tryptophan residues within the consensus sequence W-X-X-W of the TPRs, and N-glycosylated. These other glycosylations can also facilitate secretion. Disulfide bonds are present.

The protein resides in the secreted. The protein localises to the extracellular space. Its subcellular location is the extracellular matrix. The polypeptide is ADAMTS-like protein 1 (Adamtsl1) (Mus musculus (Mouse)).